Reading from the N-terminus, the 317-residue chain is Homoserine kinase (317 aa).

95–105 (PHSRGLGSSAA) is a binding site for ATP.

This sequence belongs to the GHMP kinase family. Homoserine kinase subfamily.

It is found in the cytoplasm. The enzyme catalyses L-homoserine + ATP = O-phospho-L-homoserine + ADP + H(+). The protein operates within amino-acid biosynthesis; L-threonine biosynthesis; L-threonine from L-aspartate: step 4/5. In terms of biological role, catalyzes the ATP-dependent phosphorylation of L-homoserine to L-homoserine phosphate. In Mycolicibacterium smegmatis (strain ATCC 700084 / mc(2)155) (Mycobacterium smegmatis), this protein is Homoserine kinase.